Here is a 729-residue protein sequence, read N- to C-terminus: Cellulose synthase-like protein E1 (729 aa).

Transmembrane regions (helical) follow at residues 29–49 (VIAY…IWFY) and 64–84 (LIWF…VVTQ). Residues Asp152 and Asp443 contribute to the active site. Transmembrane regions (helical) follow at residues 526-546 (LPVL…IPLF), 553-573 (WFIP…AEFL), 644-664 (MFLV…AAVA), 680-700 (QFVI…GMLL), and 709-729 (MSVT…LAFL).

Belongs to the glycosyltransferase 2 family. Plant cellulose synthase-like E subfamily.

The protein resides in the golgi apparatus membrane. Functionally, thought to be a Golgi-localized beta-glycan synthase that polymerize the backbones of noncellulosic polysaccharides (hemicelluloses) of plant cell wall. This Arabidopsis thaliana (Mouse-ear cress) protein is Cellulose synthase-like protein E1 (CSLE1).